A 684-amino-acid chain; its full sequence is Phenoloxidase 2 (684 aa).

Positions 1–51 (MSNTAVLNDLVALYDRPTEPMFRVKAKKSFKVPKEYVTDRFKNVAVEISNR) are cleaved as a propeptide — removed by PPAF1. N-linked (GlcNAc...) asparagine glycans are attached at residues Asn-81 and Asn-91. Positions 209, 213, and 238 each coordinate Cu cation. N-linked (GlcNAc...) asparagine glycosylation occurs at Asn-330. Glu-350 acts as the Proton acceptor in catalysis. Cu cation-binding residues include His-365, His-369, and His-405. Asn-416, Asn-487, Asn-491, and Asn-546 each carry an N-linked (GlcNAc...) asparagine glycan. Cystine bridges form between Cys-581–Cys-623 and Cys-583–Cys-630.

This sequence belongs to the tyrosinase family. Dimer. Might form a homodimer or a heterodimer with PPO1. Might interact with PPAF2 (via CLIP domain); the interaction might be required for PPO2 activity. Cu(2+) is required as a cofactor. In terms of processing, precursor cleaved by PPAF1. In terms of tissue distribution, hemocytes.

The protein localises to the secreted. This is a copper-containing oxidase that functions in the formation of pigments such as melanins and other polyphenolic compounds. Catalyzes the oxidation of o-diphenols (N-acetyldopamine, 4-methylcatechol and dopamine). Cannot oxidize monophenols and p-phenols (L-tyrosine, tyramine, gentisic acid and hydroquinone). Binds to the surface of hemocytes and is involved in hemocyte melanization. Activation of the enzyme in response to bacterial lipopolysaccharides (LPS) suggests it may play a role in innate immunity. This is Phenoloxidase 2 from Holotrichia diomphalia (Korean black chafer).